The primary structure comprises 121 residues: Large ribosomal subunit protein uL18 (121 aa).

The protein belongs to the universal ribosomal protein uL18 family. As to quaternary structure, part of the 50S ribosomal subunit; part of the 5S rRNA/L5/L18/L25 subcomplex. Contacts the 5S and 23S rRNAs.

Functionally, this is one of the proteins that bind and probably mediate the attachment of the 5S RNA into the large ribosomal subunit, where it forms part of the central protuberance. This chain is Large ribosomal subunit protein uL18, found in Mesomycoplasma hyopneumoniae (strain J / ATCC 25934 / NCTC 10110) (Mycoplasma hyopneumoniae).